A 127-amino-acid chain; its full sequence is UPF0102 protein NFA_41430 (127 aa).

Belongs to the UPF0102 family.

The sequence is that of UPF0102 protein NFA_41430 from Nocardia farcinica (strain IFM 10152).